Consider the following 553-residue polypeptide: MRKIEAKRGLDIECKGWEQEAVLRMLYNNLDPEVAERPEDLVVYGGIGKAARNWEAFEAIEDTLRSLEADETMLVQSGKPVAVFKTHEEAPRVLISNSVLVPEWANWDHFNELDKKGLMMYGQMTAGSWIYIGSQGIVQGTYETFGELANQHFNGKLNGTVTLTAGLGGMGGAQPLAVTMNGGVVIGVDVDETRIDKRIETRYCDVKTHDLDEALRLADEAREKGEPLSIGLVGNAVDTHKAILDKGFKIDIVTDQTSAHDPLNGYVPQGYSLEEAKAIRQKDPKQYVKEAQTSMRKHVELMLEFQKNGAVAFDYGNNIRQVAFNDGLENAFDFPGFVPAYIRPLFCEGKGPFRFAALSGNPKDIERADEEMRKIFPDNEKLIRWLDLAQEKIAFQGLPSRIAWLGYEERAKMGLALNKLVRDGEISAPIVIGRDHLDSGSVASPNRETEGMKDGSDAVGDWAILNALINTAAGGSWISFHHGGGVGMGYSLHAGMVVVADGSERADRRLGRVLTTDPGMGVVRHADAGYESAIKVAKEKGIKIPMITGKGDK.

NAD(+) is bound by residues 45–46 (GG), Q123, 169–171 (GMG), D189, R194, 235–236 (NA), 256–260 (QTSAH), 266–267 (YV), Y315, and G485.

The protein belongs to the urocanase family. It depends on NAD(+) as a cofactor.

It localises to the cytoplasm. The catalysed reaction is 4-imidazolone-5-propanoate = trans-urocanate + H2O. It participates in amino-acid degradation; L-histidine degradation into L-glutamate; N-formimidoyl-L-glutamate from L-histidine: step 2/3. Functionally, catalyzes the conversion of urocanate to 4-imidazolone-5-propionate. The sequence is that of Urocanate hydratase from Staphylococcus saprophyticus subsp. saprophyticus (strain ATCC 15305 / DSM 20229 / NCIMB 8711 / NCTC 7292 / S-41).